Here is a 1026-residue protein sequence, read N- to C-terminus: Adenylate-forming reductase 06235 (1026 aa).

The interval 37 to 422 (FEFHAKANPD…LGRIDNQVKI (386 aa)) is adenylation (A) domain. AMP contacts are provided by residues 332-333 (VT) and 412-415 (HLGR). The tract at residues 556–638 (SLVSTVGSTV…ALFIWILVTK (83 aa)) is thiolation and peptide carrier (T) domain. Positions 682–901 (CIRRVCARIY…PPTKMWVKGV (220 aa)) are reductase (R) domain. Residues 685–688 (RVCA), 769–771 (TAL), and tyrosine 840 each bind NADP(+).

This sequence belongs to the adenylate-forming reductase family.

Adenylate-forming reductase, a natural product biosynthesis enzyme that resembles non-ribosomal peptide synthetases, yet serves to modify one substrate, rather than to condense two or more building blocks. The A-domain preferentially accepts L-serine, L-alanine and L-valine as substrates. The natural product of the enzyme is not yet known. This is Adenylate-forming reductase 06235 from Coprinopsis cinerea (strain Okayama-7 / 130 / ATCC MYA-4618 / FGSC 9003) (Inky cap fungus).